The chain runs to 211 residues: Protoglabretal synthase MOI1 (211 aa).

A run of 5 helical transmembrane segments spans residues 16–36 (ASLH…TWII), 50–70 (LICW…YYVF), 104–124 (VLGI…LAAY), 135–155 (IFQF…FLTA), and 179–199 (IWVI…HAIC). In terms of domain architecture, EXPERA spans 46–188 (IERLLICWWA…IWVIVPMLIA (143 aa)).

This sequence belongs to the EBP family. As to expression, expressed in maturing fruits and in juice vesicles.

Its subcellular location is the membrane. It catalyses the reaction 7,8-epoxymelianol = protoglabretal. It participates in secondary metabolite biosynthesis; terpenoid biosynthesis. In terms of biological role, isomerase involved in the biosynthesis of glabretanes triterpene natural products such as glabretal, a component with in vitro antiproliferative properties on lymphocytes. Catalyzes the conversion of 7,8-epoxymelianol to protoglabretal via skeletal rearrangements. The polypeptide is Protoglabretal synthase MOI1 (Citrus sinensis (Sweet orange)).